The chain runs to 583 residues: COP9 signalosome complex subunit 10 (583 aa).

Positions 1 to 35 are enriched in acidic residues; it reads MSDEEDYAEYMMSEEDMSSFEMDVDSDVEPDDAGL. Positions 1 to 55 are disordered; sequence MSDEEDYAEYMMSEEDMSSFEMDVDSDVEPDDAGLEQDQQVTGDDYDGSAGNSGD. The PCI domain maps to 297 to 485; the sequence is DHYNQSQMLS…DYVYFGEEYF (189 aa).

As to quaternary structure, component of a COP9 signalosome-like (CSN) complex.

It localises to the cytoplasm. Its subcellular location is the nucleus. Component of the COP9 signalosome (CSN) complex that acts as an regulator of the ubiquitin (Ubl) conjugation pathway by mediating the deneddylation of the cullin subunit of SCF-type E3 ubiquitin-protein ligase complexes. The CSN complex is involved in the regulation of the mating pheromone response. The sequence is that of COP9 signalosome complex subunit 10 (RRI2) from Kluyveromyces lactis (strain ATCC 8585 / CBS 2359 / DSM 70799 / NBRC 1267 / NRRL Y-1140 / WM37) (Yeast).